We begin with the raw amino-acid sequence, 102 residues long: Small ribosomal subunit protein uS10 (102 aa).

It belongs to the universal ribosomal protein uS10 family. Part of the 30S ribosomal subunit.

Its function is as follows. Involved in the binding of tRNA to the ribosomes. The polypeptide is Small ribosomal subunit protein uS10 (Parvibaculum lavamentivorans (strain DS-1 / DSM 13023 / NCIMB 13966)).